Reading from the N-terminus, the 73-residue chain is Large ribosomal subunit protein bL32c (73 aa).

This sequence belongs to the bacterial ribosomal protein bL32 family.

It localises to the plastid. Its subcellular location is the chloroplast. The polypeptide is Large ribosomal subunit protein bL32c (Jasminum nudiflorum (Winter jasmine)).